The chain runs to 318 residues: Taste receptor type 2 member 60 (318 aa).

The Extracellular portion of the chain corresponds to 1 to 7; that stretch reads MNGDHMV. A helical membrane pass occupies residues 8–28; the sequence is LGSSMTDEKAIILVIILLLLC. Topologically, residues 29 to 40 are cytoplasmic; that stretch reads LVAIAGNCFITA. Residues 41 to 61 traverse the membrane as a helical segment; the sequence is ALGMEWVLQRMLLPCDKLLVS. Over 62 to 88 the chain is Extracellular; it reads LGASRFCPQWVVMGKTTYVFLYPTAFP. A helical transmembrane segment spans residues 89-109; sequence YNPVLRFLAFQWDLLNAATLW. At 110–128 the chain is on the cytoplasmic side; sequence FSTWLSVFYCVKIATFTHP. Residues 129–149 traverse the membrane as a helical segment; sequence VFLWLKHKLSEWVPWMLFSSV. Over 150–183 the chain is Extracellular; sequence GLSSFTTILFFIGNHRVYQSYLRNHLQPWNVTGN. N-linked (GlcNAc...) asparagine glycosylation is present at Asn-179. A helical membrane pass occupies residues 184–204; it reads SIWSYCEKFYLFPLKMITWTM. Over 205–234 the chain is Cytoplasmic; that stretch reads PTAVFFICMILLITSLGRHMKKALLTNSGF. Residues 235–255 traverse the membrane as a helical segment; sequence RDPSVQAHIKAMLALLSFAML. Residues 256–264 lie on the Extracellular side of the membrane; it reads FISYFLSLV. The chain crosses the membrane as a helical span at residues 265-285; sequence FSAAGIFPPLDFKFWVWESVI. Topologically, residues 286–318 are cytoplasmic; the sequence is YLCAAVHPIILLFSNRRLRAVLKRCRSSRCGTP.

Belongs to the G-protein coupled receptor T2R family.

It localises to the membrane. In terms of biological role, receptor that may play a role in the perception of bitterness and is gustducin-linked. May play a role in sensing the chemical composition of the gastrointestinal content. The activity of this receptor may stimulate alpha gustducin, mediate PLC-beta-2 activation and lead to the gating of TRPM5. The polypeptide is Taste receptor type 2 member 60 (TAS2R60) (Pongo pygmaeus (Bornean orangutan)).